A 564-amino-acid polypeptide reads, in one-letter code: Benomyl/methotrexate resistance protein (564 aa).

Residues 60–101 (IDNQGEPNSSQSSSSNNTIVDNNNNNNNDVDGDKIVVTWDGD) form a disordered region. Positions 67–88 (NSSQSSSSNNTIVDNNNNNNND) are enriched in low complexity. 12 helical membrane-spanning segments follow: residues 116–136 (AFFI…SAVY), 153–173 (VATL…LVFS), 184–204 (TSIY…TALV), 210–229 (LCIL…ATGG), 241–262 (LPVG…GPFF), 274–294 (WTFW…CFTL), 358–374 (IYIA…FEVF), 393–411 (YMSI…IPVI), 431–451 (IPIA…FGWS), 457–476 (HWVG…FLIF), 489–506 (PHYI…RSVI), and 530–551 (WGSS…LFYL).

This sequence belongs to the major facilitator superfamily. CAR1 family.

It is found in the membrane. Functionally, probable transporter. Confers resistance to benomyl and methotrexate. This is Benomyl/methotrexate resistance protein (MDR1) from Candida albicans (Yeast).